Consider the following 540-residue polypeptide: Glucose-6-phosphate isomerase (540 aa).

E350 (proton donor) is an active-site residue. Catalysis depends on residues H381 and K503.

The protein belongs to the GPI family.

The protein resides in the cytoplasm. It catalyses the reaction alpha-D-glucose 6-phosphate = beta-D-fructose 6-phosphate. Its pathway is carbohydrate biosynthesis; gluconeogenesis. It functions in the pathway carbohydrate degradation; glycolysis; D-glyceraldehyde 3-phosphate and glycerone phosphate from D-glucose: step 2/4. Its function is as follows. Catalyzes the reversible isomerization of glucose-6-phosphate to fructose-6-phosphate. The sequence is that of Glucose-6-phosphate isomerase from Burkholderia cenocepacia (strain ATCC BAA-245 / DSM 16553 / LMG 16656 / NCTC 13227 / J2315 / CF5610) (Burkholderia cepacia (strain J2315)).